A 245-amino-acid polypeptide reads, in one-letter code: Carbohydrate deacetylase (245 aa).

Mg(2+) is bound by residues His-61 and His-122.

Belongs to the YdjC deacetylase family. Mg(2+) is required as a cofactor.

Probably catalyzes the deacetylation of acetylated carbohydrates an important step in the degradation of oligosaccharides. This is Carbohydrate deacetylase (celC) from Geobacillus stearothermophilus (Bacillus stearothermophilus).